The sequence spans 95 residues: Large ribosomal subunit protein bL25 (95 aa).

Belongs to the bacterial ribosomal protein bL25 family. In terms of assembly, part of the 50S ribosomal subunit; part of the 5S rRNA/L5/L18/L25 subcomplex. Contacts the 5S rRNA. Binds to the 5S rRNA independently of L5 and L18.

This is one of the proteins that binds to the 5S RNA in the ribosome where it forms part of the central protuberance. This is Large ribosomal subunit protein bL25 from Buchnera aphidicola subsp. Acyrthosiphon pisum (strain 5A).